A 269-amino-acid chain; its full sequence is Glutamate racemase (269 aa).

Residues Asp7–Ser8 and Tyr39–Gly40 contribute to the substrate site. Cys70 (proton donor/acceptor) is an active-site residue. Asn71 to Thr72 is a substrate binding site. The active-site Proton donor/acceptor is Cys194. Thr195–His196 provides a ligand contact to substrate.

The protein belongs to the aspartate/glutamate racemases family.

The catalysed reaction is L-glutamate = D-glutamate. Its pathway is cell wall biogenesis; peptidoglycan biosynthesis. Its function is as follows. Provides the (R)-glutamate required for cell wall biosynthesis. The sequence is that of Glutamate racemase from Ruegeria sp. (strain TM1040) (Silicibacter sp.).